The following is a 193-amino-acid chain: dCTP deaminase (193 aa).

DCTP contacts are provided by residues 110 to 115, aspartate 128, 136 to 138, tyrosine 171, lysine 178, and glutamine 182; these read RSSLAR and VLE. The active-site Proton donor/acceptor is glutamate 138.

Belongs to the dCTP deaminase family. Homotrimer.

The enzyme catalyses dCTP + H2O + H(+) = dUTP + NH4(+). It participates in pyrimidine metabolism; dUMP biosynthesis; dUMP from dCTP (dUTP route): step 1/2. Catalyzes the deamination of dCTP to dUTP. The sequence is that of dCTP deaminase from Escherichia coli (strain K12 / MC4100 / BW2952).